A 502-amino-acid chain; its full sequence is Protein MGF 505-5R (502 aa).

Belongs to the asfivirus MGF 505 family.

In terms of biological role, plays a role in virus cell tropism, and may be required for efficient virus replication in macrophages. The protein is Protein MGF 505-5R of Ornithodoros (relapsing fever ticks).